Reading from the N-terminus, the 302-residue chain is Mitochondrial glycine transporter (302 aa).

Solcar repeat units lie at residues 22-112, 119-203, and 213-297; these read HPVF…LKHH, PKPL…AKKL, and FSPV…MMEK. 6 consecutive transmembrane segments (helical) span residues 28–53, 87–113, 125–150, 178–201, 217–243, and 272–290; these read FVCG…TRLQ, GVSP…KHHF, VMLG…TRYE, GLTA…TRAK, LNFG…KTHI, and GGLP…AWTV.

Belongs to the mitochondrial carrier (TC 2.A.29) family. SLC25A38 subfamily.

Its subcellular location is the mitochondrion inner membrane. The enzyme catalyses glycine(in) = glycine(out). In terms of biological role, mitochondrial glycine transporter that imports glycine into the mitochondrial matrix. Plays an important role in providing glycine for the first enzymatic step in heme biosynthesis, the condensation of glycine with succinyl-CoA to produce 5-aminolevulinate (ALA) in the mitochondrial matrix. Required during erythropoiesis. Functionally, may play a role as pro-apoptotic protein that induces caspase-dependent apoptosis. This is Mitochondrial glycine transporter from Xenopus tropicalis (Western clawed frog).